Here is a 404-residue protein sequence, read N- to C-terminus: Multidrug resistance protein MdtG (404 aa).

11 helical membrane passes run 19-39 (LGCF…PLYV), 56-76 (LVFS…GGLA), 90-110 (LGMA…QFLI), 113-133 (ALLG…ATQV), 144-164 (TLST…GLLA), 171-191 (PVFF…FFFI), 222-242 (LFVT…ILTL), 254-274 (IAFI…LSAP), 288-308 (ILIV…FVQT), 317-337 (FLLG…LVYN), and 376-396 (AVFC…WNSL).

Belongs to the major facilitator superfamily. DHA1 family. MdtG (TC 2.A.1.2.20) subfamily.

The protein localises to the cell inner membrane. The chain is Multidrug resistance protein MdtG from Salmonella choleraesuis (strain SC-B67).